Consider the following 382-residue polypeptide: Alkanesulfonate monooxygenase (382 aa).

Belongs to the SsuD family.

It carries out the reaction an alkanesulfonate + FMNH2 + O2 = an aldehyde + FMN + sulfite + H2O + 2 H(+). Functionally, catalyzes the desulfonation of aliphatic sulfonates. This chain is Alkanesulfonate monooxygenase, found in Ectopseudomonas mendocina (strain ymp) (Pseudomonas mendocina).